The following is a 257-amino-acid chain: Imidazole glycerol phosphate synthase subunit HisF (257 aa).

Active-site residues include aspartate 11 and aspartate 130.

This sequence belongs to the HisA/HisF family. Heterodimer of HisH and HisF.

Its subcellular location is the cytoplasm. It carries out the reaction 5-[(5-phospho-1-deoxy-D-ribulos-1-ylimino)methylamino]-1-(5-phospho-beta-D-ribosyl)imidazole-4-carboxamide + L-glutamine = D-erythro-1-(imidazol-4-yl)glycerol 3-phosphate + 5-amino-1-(5-phospho-beta-D-ribosyl)imidazole-4-carboxamide + L-glutamate + H(+). It functions in the pathway amino-acid biosynthesis; L-histidine biosynthesis; L-histidine from 5-phospho-alpha-D-ribose 1-diphosphate: step 5/9. In terms of biological role, IGPS catalyzes the conversion of PRFAR and glutamine to IGP, AICAR and glutamate. The HisF subunit catalyzes the cyclization activity that produces IGP and AICAR from PRFAR using the ammonia provided by the HisH subunit. This is Imidazole glycerol phosphate synthase subunit HisF from Trichormus variabilis (strain ATCC 29413 / PCC 7937) (Anabaena variabilis).